The following is a 265-amino-acid chain: Phosphate import ATP-binding protein PstB 2 (265 aa).

One can recognise an ABC transporter domain in the interval 13–260 (FRTENLNVYY…PTKQATRDYV (248 aa)). 45 to 52 (GPSGCGKS) serves as a coordination point for ATP.

Belongs to the ABC transporter superfamily. Phosphate importer (TC 3.A.1.7) family. In terms of assembly, the complex is composed of two ATP-binding proteins (PstB), two transmembrane proteins (PstC and PstA) and a solute-binding protein (PstS).

The protein localises to the cell inner membrane. It catalyses the reaction phosphate(out) + ATP + H2O = ADP + 2 phosphate(in) + H(+). In terms of biological role, part of the ABC transporter complex PstSACB involved in phosphate import. Responsible for energy coupling to the transport system. The protein is Phosphate import ATP-binding protein PstB 2 of Synechococcus sp. (strain JA-2-3B'a(2-13)) (Cyanobacteria bacterium Yellowstone B-Prime).